The sequence spans 202 residues: Protein lin-28 homolog A (202 aa).

Disordered stretches follow at residues methionine 1–histidine 33 and serine 100–glycine 128. Acidic residues predominate over residues glutamate 18–serine 29. The 74-residue stretch at histidine 33 to proline 106 folds into the CSD domain. Residues glycine 107 to arginine 130 are flexible linker. 2 CCHC-type zinc fingers span residues aspartate 129–leucine 146 and lysine 151–isoleucine 168. Zn(2+) contacts are provided by cysteine 131, cysteine 134, histidine 139, cysteine 144, cysteine 153, cysteine 156, histidine 161, and cysteine 166. Positions alanine 170 to aspartate 202 are disordered. A compositionally biased stretch (polar residues) spans glutamine 171 to threonine 185. Serine 174 is subject to Phosphoserine.

The protein belongs to the lin-28 family. As to quaternary structure, monomer.

The protein localises to the cytoplasm. Its subcellular location is the rough endoplasmic reticulum. The protein resides in the P-body. It localises to the stress granule. It is found in the nucleus. The protein localises to the nucleolus. RNA-binding protein that inhibits processing of pre-let-7 miRNAs and regulates translation of mRNAs that control developmental timing, pluripotency and metabolism. Seems to recognize a common structural G-quartet (G4) feature in its miRNA and mRNA targets. 'Translational enhancer' that drives specific mRNAs to polysomes and increases the efficiency of protein synthesis. Its association with the translational machinery and target mRNAs results in an increased number of initiation events per molecule of mRNA and, indirectly, in mRNA stabilization. Suppressor of microRNA (miRNA) biogenesis, including that of let-7. Binds specific target miRNA precursors (pre-miRNAs), recognizing an 5'-GGAG-3' motif found in their terminal loop, and recruits uridylyltransferase. This results in the terminal uridylation of target pre-miRNAs. Uridylated pre-miRNAs fail to be processed by Dicer and undergo degradation. Localized to the periendoplasmic reticulum area, binds to a large number of spliced mRNAs and inhibits the translation of mRNAs destined for the ER, reducing the synthesis of transmembrane proteins, ER or Golgi lumen proteins, and secretory proteins. Binds to and enhances the translation of mRNAs for several metabolic enzymes, increasing glycolysis and oxidative phosphorylation. Which, with the let-7 repression may enhance tissue repair in adult tissue. In Danio rerio (Zebrafish), this protein is Protein lin-28 homolog A (lin28a).